Here is a 370-residue protein sequence, read N- to C-terminus: Protein SUPPRESSOR OF NIM1 1 (370 aa).

The 43-residue stretch at 1-43 folds into the F-box domain; it reads MALPWELEEDILSRLPPISLVRFRTVSKHWNSLFNDKTFINNH.

As to expression, ubiquitous, at low levels.

Functionally, negatively regulates a plant defense signaling pathway which is independent of salicylic acid (SA) and systemic acquired resistance (SAR). Confers sensitivity to P.syringae and P.parasitica. The protein is Protein SUPPRESSOR OF NIM1 1 (SON1) of Arabidopsis thaliana (Mouse-ear cress).